Here is a 686-residue protein sequence, read N- to C-terminus: Lysophospholipase 3 (686 aa).

An N-terminal signal peptide occupies residues 1–26 (MIRPLCSKIIISYIFAISQFLLAANA). The 554-residue stretch at 39-592 (SCPDDINLVR…KNYCWNGTLD (554 aa)) folds into the PLA2c domain. Residues N56, N82, N129, N166, N221, N283, N313, N351, N495, N519, N547, N571, N588, and N614 are each glycosylated (N-linked (GlcNAc...) asparagine). N659 is lipidated: GPI-anchor amidated asparagine. Residues 660 to 686 (SGSHLSGISVKFSAMIMLTLLMFTGAV) constitute a propeptide, removed in mature form.

This sequence belongs to the lysophospholipase family.

It is found in the cell membrane. The catalysed reaction is a 1-acyl-sn-glycero-3-phosphocholine + H2O = sn-glycerol 3-phosphocholine + a fatty acid + H(+). Its function is as follows. Sequentially removes both fatty acyl groups from diacylglycerophospholipids and therefore has both phospholipase A and lysophospholipase activities. Substrate preference is phosphatidylserine &gt; phosphatidylinositol. Does not cleave phosphatidylcholine, phosphatidylethanolamine, phosphatidic acid and phosphatidylinositol-bisphosphate. Mainly responsible for the degradation of phosphatidylinositol in vivo. The chain is Lysophospholipase 3 (PLB3) from Saccharomyces cerevisiae (strain ATCC 204508 / S288c) (Baker's yeast).